Reading from the N-terminus, the 197-residue chain is Class A basic helix-loop-helix protein 15 (197 aa).

Residues 1 to 12 (MKTKNRPPRRRT) are compositionally biased toward basic residues. Disordered stretches follow at residues 1 to 82 (MKTK…ERER) and 175 to 197 (TEDQPQGHLQRYSTQIHSFREGS). Thr-12 and Thr-25 each carry phosphothreonine. Polar residues predominate over residues 27–36 (DRSQSGSGAS). Over residues 65–82 (SRRENSVQRRLESNERER) the composition is skewed to basic and acidic residues. One can recognise a bHLH domain in the interval 72–124 (QRRLESNERERQRMHKLNNAFQALREVIPHVRADKKLSKIETLTLAKNYIKSL).

Forms homodimers or heterodimers with TCF3 gene products E12 and E47. These dimers bind to the E-box site, however, heterodimer with MYOD1 does not bind target DNA. As to expression, expressed in liver, spleen and olfactory epithelium. Weaker expression is seen in skeletal muscle, cardiac muscle, eye and brain tissue.

It localises to the nucleus. Plays a role in controlling the transcriptional activity of MyoD, ensuring that expanding myoblast populations remain undifferentiated. Repression may occur through muscle-specific E-box occupancy by homodimers. May also negatively regulate bHLH-mediated transcription through an N-terminal repressor domain. Serves as a key regulator of acinar cell function, stability, and identity. Also required for normal organelle localization in exocrine cells and for mitochondrial calcium ion transport. May function as a unique regulator of gene expression in several different embryonic and postnatal cell lineages. Binds to the E-box consensus sequence 5'-CANNTG-3'. The protein is Class A basic helix-loop-helix protein 15 (Bhlha15) of Rattus norvegicus (Rat).